A 381-amino-acid chain; its full sequence is Queuine tRNA-ribosyltransferase (381 aa).

Catalysis depends on D103, which acts as the Proton acceptor. Substrate is bound by residues D103–F107, D157, Q200, and G227. The RNA binding stretch occupies residues G258–E264. D277 acts as the Nucleophile in catalysis. The segment at T282–R286 is RNA binding; important for wobble base 34 recognition. Zn(2+) contacts are provided by C315, C317, C320, and H346.

This sequence belongs to the queuine tRNA-ribosyltransferase family. Homodimer. Within each dimer, one monomer is responsible for RNA recognition and catalysis, while the other monomer binds to the replacement base PreQ1. It depends on Zn(2+) as a cofactor.

It carries out the reaction 7-aminomethyl-7-carbaguanine + guanosine(34) in tRNA = 7-aminomethyl-7-carbaguanosine(34) in tRNA + guanine. It participates in tRNA modification; tRNA-queuosine biosynthesis. In terms of biological role, catalyzes the base-exchange of a guanine (G) residue with the queuine precursor 7-aminomethyl-7-deazaguanine (PreQ1) at position 34 (anticodon wobble position) in tRNAs with GU(N) anticodons (tRNA-Asp, -Asn, -His and -Tyr). Catalysis occurs through a double-displacement mechanism. The nucleophile active site attacks the C1' of nucleotide 34 to detach the guanine base from the RNA, forming a covalent enzyme-RNA intermediate. The proton acceptor active site deprotonates the incoming PreQ1, allowing a nucleophilic attack on the C1' of the ribose to form the product. After dissociation, two additional enzymatic reactions on the tRNA convert PreQ1 to queuine (Q), resulting in the hypermodified nucleoside queuosine (7-(((4,5-cis-dihydroxy-2-cyclopenten-1-yl)amino)methyl)-7-deazaguanosine). The polypeptide is Queuine tRNA-ribosyltransferase (Cyanothece sp. (strain PCC 7425 / ATCC 29141)).